Reading from the N-terminus, the 954-residue chain is Translation initiation factor IF-2 (954 aa).

Positions 56–75 are enriched in low complexity; it reads KAAAPAAPKAPAPAAESRPA. The interval 56–355 is disordered; the sequence is KAAAPAAPKA…GVSVPRGDGN (300 aa). A compositionally biased stretch (pro residues) spans 76–87; sequence APAPGPAAPKAP. Low complexity-rich tracts occupy residues 88 to 125 and 138 to 151; these read APKV…KPGA and PRQG…SAPR. Pro residues predominate over residues 241 to 254; it reads PGAPRPGGPRPTPG. Residues 269 to 322 show a composition bias toward gly residues; the sequence is GRPGGGGRGPGRPGAPGTGGPGGGGGAPAGGGFGKGGRGRGGTQGAFGKGGAGR. Basic residues predominate over residues 323–332; the sequence is GKQRKSKRAK. A tr-type G domain is found at 447-618; that stretch reads PRAPVVTVMG…AVLLTADAAL (172 aa). Positions 456 to 463 are G1; the sequence is GHVDHGKT. 456-463 is a binding site for GTP; sequence GHVDHGKT. The tract at residues 481–485 is G2; sequence GITQH. Residues 506–509 are G3; it reads DTPG. Residues 506–510 and 560–563 contribute to the GTP site; these read DTPGH and NKID. The G4 stretch occupies residues 560-563; sequence NKID. Residues 596-598 form a G5 region; it reads SAR.

It belongs to the TRAFAC class translation factor GTPase superfamily. Classic translation factor GTPase family. IF-2 subfamily.

Its subcellular location is the cytoplasm. Functionally, one of the essential components for the initiation of protein synthesis. Protects formylmethionyl-tRNA from spontaneous hydrolysis and promotes its binding to the 30S ribosomal subunits. Also involved in the hydrolysis of GTP during the formation of the 70S ribosomal complex. This Pseudarthrobacter chlorophenolicus (strain ATCC 700700 / DSM 12829 / CIP 107037 / JCM 12360 / KCTC 9906 / NCIMB 13794 / A6) (Arthrobacter chlorophenolicus) protein is Translation initiation factor IF-2.